The primary structure comprises 603 residues: Elongation factor 4 (603 aa).

Residues 7 to 189 (SRIRNFSIIA…SIVHLVPPPQ (183 aa)) enclose the tr-type G domain. GTP is bound by residues 19–24 (DHGKST) and 136–139 (NKID).

It belongs to the TRAFAC class translation factor GTPase superfamily. Classic translation factor GTPase family. LepA subfamily.

Its subcellular location is the cell inner membrane. It carries out the reaction GTP + H2O = GDP + phosphate + H(+). Required for accurate and efficient protein synthesis under certain stress conditions. May act as a fidelity factor of the translation reaction, by catalyzing a one-codon backward translocation of tRNAs on improperly translocated ribosomes. Back-translocation proceeds from a post-translocation (POST) complex to a pre-translocation (PRE) complex, thus giving elongation factor G a second chance to translocate the tRNAs correctly. Binds to ribosomes in a GTP-dependent manner. This Rippkaea orientalis (strain PCC 8801 / RF-1) (Cyanothece sp. (strain PCC 8801)) protein is Elongation factor 4.